The following is a 245-amino-acid chain: tRNA pseudouridine synthase A (245 aa).

Catalysis depends on Asp-52, which acts as the Nucleophile. Tyr-110 contributes to the substrate binding site.

Belongs to the tRNA pseudouridine synthase TruA family. As to quaternary structure, homodimer.

It carries out the reaction uridine(38/39/40) in tRNA = pseudouridine(38/39/40) in tRNA. Functionally, formation of pseudouridine at positions 38, 39 and 40 in the anticodon stem and loop of transfer RNAs. The protein is tRNA pseudouridine synthase A of Pseudothermotoga lettingae (strain ATCC BAA-301 / DSM 14385 / NBRC 107922 / TMO) (Thermotoga lettingae).